The sequence spans 67 residues: Large ribosomal subunit protein bL35 (67 aa).

The protein belongs to the bacterial ribosomal protein bL35 family.

This chain is Large ribosomal subunit protein bL35, found in Acidiphilium cryptum (strain JF-5).